The primary structure comprises 145 residues: Large ribosomal subunit protein uL13 (145 aa).

This sequence belongs to the universal ribosomal protein uL13 family. In terms of assembly, part of the 50S ribosomal subunit.

In terms of biological role, this protein is one of the early assembly proteins of the 50S ribosomal subunit, although it is not seen to bind rRNA by itself. It is important during the early stages of 50S assembly. The sequence is that of Large ribosomal subunit protein uL13 from Staphylococcus epidermidis (strain ATCC 35984 / DSM 28319 / BCRC 17069 / CCUG 31568 / BM 3577 / RP62A).